We begin with the raw amino-acid sequence, 209 residues long: Rac-like GTP-binding protein ARAC9 (209 aa).

25 to 32 (GDGAVGKT) contributes to the GTP binding site. Positions 47–55 (YVPTVFDNF) match the Effector region motif. GTP contacts are provided by residues 72 to 76 (DTAGQ) and 130 to 133 (TKSD). Cys206 is subject to Cysteine methyl ester. Residue Cys206 is the site of S-geranylgeranyl cysteine attachment. Positions 207–209 (HVL) are cleaved as a propeptide — removed in mature form.

Belongs to the small GTPase superfamily. Rho family. Interacts with SPK1.

Its subcellular location is the cytoplasm. It is found in the membrane. Inactive GDP-bound Rho GTPases reside in the cytosol, are found in a complex with Rho GDP-dissociation inhibitors (Rho GDIs), and are released from the GDI protein in order to translocate to membranes upon activation. The protein is Rac-like GTP-binding protein ARAC9 (ARAC9) of Arabidopsis thaliana (Mouse-ear cress).